The primary structure comprises 420 residues: GDP-mannose transporter 2 (420 aa).

Residues 1-11 (MASYTPSSSRP) show a composition bias toward polar residues. The interval 1 to 21 (MASYTPSSSRPHTPLGLSPRG) is disordered. The Cytoplasmic segment spans residues 1–76 (MASYTPSSSR…KAKKEEVCMP (76 aa)). The chain crosses the membrane as a helical span at residues 77–97 (ASTTVLPILSYCVASIMMTVV). Topologically, residues 98-106 (NKFVVSGRQ) are lumenal. A helical membrane pass occupies residues 107-127 (FTMTFLLLAIQSFVCVACVWL). The Cytoplasmic segment spans residues 128 to 145 (AKRIGVINFRDWDMNDAK). A helical transmembrane segment spans residues 146–168 (AWFPVSSLLVAVIYTGSKSLQFL). The Lumenal portion of the chain corresponds to 169 to 171 (SIP). Residues 172–194 (VYTIFKNLTIILIAYGEVIWFGG) form a helical membrane-spanning segment. Over 195 to 200 (HVTPLT) the chain is Cytoplasmic. A helical membrane pass occupies residues 201–223 (LCSFFLMVGSSVIAAWADISTTL). Topologically, residues 224–251 (SKLSAGVAVVDPISGADVPLSSISVMDT) are lumenal. A helical membrane pass occupies residues 252–272 (MNVGYLWMFINCLASAGYVLF). The Cytoplasmic portion of the chain corresponds to 273 to 293 (MRKRIKVTGFKDWDSMFYNNL). The helical transmembrane segment at 294–314 (LSIPVLFVFSLIIEDWGAASF) threads the bilayer. The Lumenal portion of the chain corresponds to 315–323 (SRNFPEEGR). A helical transmembrane segment spans residues 324–344 (AFLLSAIAFSGAAAVFISYST). The Cytoplasmic segment spans residues 345-355 (AWCVRICGATT). The helical transmembrane segment at 356–376 (YSLVGALNKLPVAASGILFFG) threads the bilayer. The Lumenal segment spans residues 377 to 378 (DP). Residues 379-399 (VNFGNVSAILVGGVSGIVYAV) traverse the membrane as a helical segment. Residues 400 to 420 (AKTNQAKVEKSKQARGGESKA) lie on the Cytoplasmic side of the membrane.

The protein belongs to the TPT transporter family. SLC35D subfamily. In terms of assembly, homooligomer.

Its subcellular location is the golgi apparatus membrane. It is found in the cytoplasmic vesicle membrane. The protein localises to the endoplasmic reticulum membrane. In terms of biological role, involved in the import of GDP-mannose from the cytoplasm into the Golgi lumen. In Cryptococcus neoformans var. neoformans serotype D (strain B-3501A) (Filobasidiella neoformans), this protein is GDP-mannose transporter 2 (GMT2).